A 461-amino-acid polypeptide reads, in one-letter code: Na(+)/H(+) antiporter NhaA (461 aa).

The disordered stretch occupies residues 1-23 (MILSTQRLGRFMSPAPTPAPDAK). The next 12 membrane-spanning stretches (helical) occupy residues 48 to 68 (VGGA…NSPV), 89 to 109 (LSLG…LVGL), 127 to 147 (IVPV…YAAV), 157 to 177 (GWAI…AIIG), 186 to 206 (IFLL…IAFF), 211 to 231 (IQAA…FLAQ), 236 to 256 (FFGA…IVTW), 257 to 277 (ALVH…GFAV), 305 to 325 (ISAG…AVGG), 339 to 359 (IGII…TTWI), 374 to 394 (WIDV…SLLV), and 408 to 428 (HAKV…TVVL).

This sequence belongs to the NhaA Na(+)/H(+) (TC 2.A.33) antiporter family.

The protein resides in the cell membrane. The catalysed reaction is Na(+)(in) + 2 H(+)(out) = Na(+)(out) + 2 H(+)(in). Functionally, na(+)/H(+) antiporter that extrudes sodium in exchange for external protons. This Arthrobacter sp. (strain FB24) protein is Na(+)/H(+) antiporter NhaA.